The chain runs to 148 residues: Transcriptional repressor NrdR (148 aa).

Residues 3–32 fold into a zinc finger; that stretch reads CPKCSSEESKVVDSRQAEDAIRRRRVCESC. The ATP-cone domain maps to 47 to 137; the sequence is LLVIKKDDKR…VYRSFKDVSE (91 aa).

Belongs to the NrdR family. The cofactor is Zn(2+).

Its function is as follows. Negatively regulates transcription of bacterial ribonucleotide reductase nrd genes and operons by binding to NrdR-boxes. The sequence is that of Transcriptional repressor NrdR from Lactococcus lactis subsp. lactis (strain IL1403) (Streptococcus lactis).